A 162-amino-acid polypeptide reads, in one-letter code: uncharacterized protein (162 aa).

Residues 5-25 traverse the membrane as a helical segment; it reads IIILFLFTAILCSITLCGCIS.

The protein localises to the membrane. This is an uncharacterized protein from Methanocaldococcus jannaschii (strain ATCC 43067 / DSM 2661 / JAL-1 / JCM 10045 / NBRC 100440) (Methanococcus jannaschii).